We begin with the raw amino-acid sequence, 471 residues long: MQSMPWLFRQSLRTGLNLSRTSLPGRSPISPAPISKVHSKTARRNFSVCLRCHFRYQPSLRSDEIKRSTDEKQDKKIEEPVIALGAPESTQAEPNAGAQDTSQTADTVHTQGQEGKKEDEPGSTQNGGLPSYIEDRRSQFSKQFTTWMDNLQSNVFVAGQRLNDLTGYSSIEALKRNIQEQEKRLRAARHRVRTAKEAYAAAINRRSTSQREVNELLQRKHAWSPADLERFTHLYRNDHTNEVAENETQEALSAAERESEEAAASLTKSILSRYHEEQVWSDKIRRMSTWGTWGLMGVNVLLFLIFQIAVEPWRRKRLVKGFEEKVLEAIEKEKILVHSQPVPPVEFTATQDAHSPTSGLVTPSPGDNIASEESSEATVAANTPTTTAEDEASGSMAPENITSSSLESYKPPSLQSLLSSMSIECCRQYIHYLLSESPVTVTQRDISVVAATSAAAGATLMGLVVALIRSQ.

A disordered region spans residues 84–132; it reads LGAPESTQAEPNAGAQDTSQTADTVHTQGQEGKKEDEPGSTQNGGLPSY. Residues 88 to 113 show a composition bias toward polar residues; sequence ESTQAEPNAGAQDTSQTADTVHTQGQ. A coiled-coil region spans residues 168–269; it reads YSSIEALKRN…EEAAASLTKS (102 aa). A helical membrane pass occupies residues 290 to 310; the sequence is WGTWGLMGVNVLLFLIFQIAV. Over 311 to 447 the chain is Mitochondrial intermembrane; sequence EPWRRKRLVK…PVTVTQRDIS (137 aa). Residues 347-408 form a disordered region; that stretch reads FTATQDAHSP…ENITSSSLES (62 aa). Polar residues predominate over residues 348–361; sequence TATQDAHSPTSGLV. A compositionally biased stretch (low complexity) spans 376 to 387; it reads EATVAANTPTTT. The chain crosses the membrane as a helical span at residues 448 to 468; that stretch reads VVAATSAAAGATLMGLVVALI. The Mitochondrial matrix portion of the chain corresponds to 469–471; it reads RSQ.

The protein belongs to the SHE9 family. As to quaternary structure, homooligomer.

The protein localises to the mitochondrion inner membrane. Its function is as follows. Required for the maintenance of the structure of the mitochondrial inner membrane. Involved in mitochondrial morphology. Causes growth arrest when highly overexpressed. This Emericella nidulans (strain FGSC A4 / ATCC 38163 / CBS 112.46 / NRRL 194 / M139) (Aspergillus nidulans) protein is Sensitive to high expression protein 9 homolog, mitochondrial (she9).